Here is a 320-residue protein sequence, read N- to C-terminus: Cytochrome f (320 aa).

Positions 1–35 are cleaved as a signal peptide; it reads MQIRNTFSSLKGEITRFISVSLMIYIITRASISNA. 4 residues coordinate heme: Tyr-36, Cys-56, Cys-59, and His-60. A helical membrane pass occupies residues 286-306; sequence VQGLLFFLASVVLAQIFLVLK.

This sequence belongs to the cytochrome f family. In terms of assembly, the 4 large subunits of the cytochrome b6-f complex are cytochrome b6, subunit IV (17 kDa polypeptide, petD), cytochrome f and the Rieske protein, while the 4 small subunits are PetG, PetL, PetM and PetN. The complex functions as a dimer. It depends on heme as a cofactor.

The protein resides in the plastid. The protein localises to the chloroplast thylakoid membrane. Its function is as follows. Component of the cytochrome b6-f complex, which mediates electron transfer between photosystem II (PSII) and photosystem I (PSI), cyclic electron flow around PSI, and state transitions. In Citrus sinensis (Sweet orange), this protein is Cytochrome f.